Consider the following 436-residue polypeptide: GTPase Der (436 aa).

2 consecutive EngA-type G domains span residues 4-167 (PVIA…PKIE) and 176-351 (IRFS…ESHS). GTP contacts are provided by residues 10–17 (GRPNVGKS), 57–61 (DTGGI), 119–122 (NKVD), 182–189 (GRPNVGKS), 229–233 (DTAGM), and 294–297 (NKWD). A KH-like domain is found at 352-436 (IRVQTNVLND…PIHIIARARD (85 aa)).

This sequence belongs to the TRAFAC class TrmE-Era-EngA-EngB-Septin-like GTPase superfamily. EngA (Der) GTPase family. As to quaternary structure, associates with the 50S ribosomal subunit.

In terms of biological role, GTPase that plays an essential role in the late steps of ribosome biogenesis. The protein is GTPase Der of Bacillus mycoides (strain KBAB4) (Bacillus weihenstephanensis).